We begin with the raw amino-acid sequence, 339 residues long: Dihydroorotate dehydrogenase (quinone) (339 aa).

FMN contacts are provided by residues 61-65 and threonine 85; that span reads AGLDK. Residue lysine 65 participates in substrate binding. Residue 110–114 coordinates substrate; the sequence is NRMGF. 2 residues coordinate FMN: asparagine 138 and asparagine 171. Asparagine 171 contributes to the substrate binding site. Residue serine 174 is the Nucleophile of the active site. Asparagine 176 is a binding site for substrate. Residues lysine 216 and threonine 244 each contribute to the FMN site. 245 to 246 is a substrate binding site; it reads NT. Residues glycine 267, glycine 296, and 317-318 each bind FMN; that span reads YS.

This sequence belongs to the dihydroorotate dehydrogenase family. Type 2 subfamily. Monomer. The cofactor is FMN.

The protein localises to the cell membrane. The catalysed reaction is (S)-dihydroorotate + a quinone = orotate + a quinol. It participates in pyrimidine metabolism; UMP biosynthesis via de novo pathway; orotate from (S)-dihydroorotate (quinone route): step 1/1. In terms of biological role, catalyzes the conversion of dihydroorotate to orotate with quinone as electron acceptor. This chain is Dihydroorotate dehydrogenase (quinone), found in Saccharophagus degradans (strain 2-40 / ATCC 43961 / DSM 17024).